Consider the following 820-residue polypeptide: Cell division control protein 48 homolog C (820 aa).

Disordered stretches follow at residues 72 to 157 (RVKD…RFDL) and 169 to 188 (LNSS…VEVE). Acidic residues predominate over residues 76-87 (EDEDDNIGDEEG). The stretch at 85–122 (EEGSASQRKKQRRVDEKEEKLQRAEQSHLRKRNMERSV) forms a coiled coil. The segment covering 97–119 (RVDEKEEKLQRAEQSHLRKRNME) has biased composition (basic and acidic residues). Over residues 121–142 (SVSSSPSSSSSSEDSGDVSTSE) the composition is skewed to low complexity. Residues 274-281 (GPPGCGKT) and 569-576 (GPPGCGKT) each bind ATP.

The protein belongs to the AAA ATPase family.

Its subcellular location is the nucleus. It is found in the cytoplasm. The protein localises to the cytoskeleton. It localises to the phragmoplast. Its function is as follows. Probably functions in cell division and growth processes. Interacts with certain SNAREs as part of specialized membrane fusion events where vesicles from the same organelle fuse (homotypic fusion). The chain is Cell division control protein 48 homolog C (CDC48C) from Arabidopsis thaliana (Mouse-ear cress).